The primary structure comprises 908 residues: Flap endonuclease GEN homolog 1 (908 aa).

An XPG-N domain region spans residues 2-96 (GVNDLWQILE…SKRNQSRYGS (95 aa)). Mg(2+) is bound by residues Asp-30, Glu-75, Glu-134, Glu-136, Asp-155, Asp-157, and Asp-208. Residues 122–208 (ECLGIPWVQA…VGLAILLGCD (87 aa)) are XPG-I domain. The 5'-3' exonuclease domain stretch occupies residues 208–384 (DYLPKGVPGV…LLVLLTHYDM (177 aa)). The tract at residues 390–464 (GSRNSNQLQP…VYQKQKLEIK (75 aa)) is chromodomain. Residues Ser-801 and Ser-802 each carry the phosphoserine modification.

Belongs to the XPG/RAD2 endonuclease family. GEN subfamily. Largely monomeric, dimerizes on the Holliday junction and the first nick occurs upon dimerization at the junction. Requires Mg(2+) as cofactor.

Its subcellular location is the nucleus. Endonuclease which resolves Holliday junctions (HJs) by the introduction of symmetrically related cuts across the junction point, to produce nicked duplex products in which the nicks can be readily ligated. Four-way DNA intermediates, also known as Holliday junctions, are formed during homologous recombination and DNA repair, and their resolution is necessary for proper chromosome segregation. Cleaves HJs by a nick and counter-nick mechanism involving dual coordinated incisions that lead to the formation of ligatable nicked duplex products. Cleavage of the first strand is rate limiting, while second strand cleavage is rapid. Largely monomeric, dimerizes on the HJ and the first nick occurs upon dimerization at the junction. Efficiently cleaves both single and double HJs contained within large recombination intermediates. Exhibits a weak sequence preference for incision between two G residues that reside in a T-rich region of DNA. Also has endonuclease activity on 5'-flap and replication fork (RF) DNA substrates. This Homo sapiens (Human) protein is Flap endonuclease GEN homolog 1 (GEN1).